The sequence spans 60 residues: Large ribosomal subunit protein bL32 (60 aa).

It belongs to the bacterial ribosomal protein bL32 family.

The protein is Large ribosomal subunit protein bL32 of Streptococcus gordonii (strain Challis / ATCC 35105 / BCRC 15272 / CH1 / DL1 / V288).